The primary structure comprises 412 residues: Serine hydroxymethyltransferase (412 aa).

Residues L117 and 121 to 123 (GHL) each bind (6S)-5,6,7,8-tetrahydrofolate. K226 carries the N6-(pyridoxal phosphate)lysine modification.

This sequence belongs to the SHMT family. Homodimer. The cofactor is pyridoxal 5'-phosphate.

It is found in the cytoplasm. The enzyme catalyses (6R)-5,10-methylene-5,6,7,8-tetrahydrofolate + glycine + H2O = (6S)-5,6,7,8-tetrahydrofolate + L-serine. It functions in the pathway one-carbon metabolism; tetrahydrofolate interconversion. Its pathway is amino-acid biosynthesis; glycine biosynthesis; glycine from L-serine: step 1/1. Catalyzes the reversible interconversion of serine and glycine with tetrahydrofolate (THF) serving as the one-carbon carrier. This reaction serves as the major source of one-carbon groups required for the biosynthesis of purines, thymidylate, methionine, and other important biomolecules. Also exhibits THF-independent aldolase activity toward beta-hydroxyamino acids, producing glycine and aldehydes, via a retro-aldol mechanism. In Natranaerobius thermophilus (strain ATCC BAA-1301 / DSM 18059 / JW/NM-WN-LF), this protein is Serine hydroxymethyltransferase.